We begin with the raw amino-acid sequence, 70 residues long: UPF0352 protein PSHAa1818 (70 aa).

It belongs to the UPF0352 family.

The protein is UPF0352 protein PSHAa1818 of Pseudoalteromonas translucida (strain TAC 125).